The sequence spans 434 residues: Trigger factor (434 aa).

A PPIase FKBP-type domain is found at 161 to 246 (GKRVSIDFVG…VNKVEARELP (86 aa)).

This sequence belongs to the FKBP-type PPIase family. Tig subfamily.

The protein localises to the cytoplasm. It carries out the reaction [protein]-peptidylproline (omega=180) = [protein]-peptidylproline (omega=0). Functionally, involved in protein export. Acts as a chaperone by maintaining the newly synthesized protein in an open conformation. Functions as a peptidyl-prolyl cis-trans isomerase. This is Trigger factor from Vibrio parahaemolyticus serotype O3:K6 (strain RIMD 2210633).